A 692-amino-acid polypeptide reads, in one-letter code: NADH-ubiquinone oxidoreductase chain 5 (692 aa).

17 helical membrane passes run 5–23 (IIILPLLGSIVSGFFGRKV), 30–52 (ILGCLSIITTTILAIISFFEVGF), 81–103 (LTVSMLIPVLVISSLVHFYSIGY), 112–129 (RFFSYLSLFTFMMIILVT), 133–155 (YLLMFVGWEGVGVCSYLLVSFWF), 168–190 (FLTNRVGDCFLTIGMFVILWSLG), 200–222 (LAPYINENIITIIGICLLIGAMA), 243–262 (VSALIHAATMVTAGVYLLIR), 272–294 (TVLLICLWLGAVTTVFSSLIGLF), 301–319 (IIAYSTMSQLGMMVIAIGL), 329–351 (LINHAFYKGLLFLGAGAVIHAVV), 364–386 (SFLPLTYTVILIASLSLVAFPFM), 409–431 (NVYFIATIGAVFTTLYSVKVIYL), 452–471 (IFLSLPLVILAIFSIYFGYL), 511–528 (LLPFFLTIFFSVLSIVYY), 535–557 (VVDFNLTNLGYYIYGFFNQRFLV), and 615–637 (YALYILIGACFYLSIFTFISIFF).

The protein belongs to the complex I subunit 5 family.

It is found in the mitochondrion inner membrane. It catalyses the reaction a ubiquinone + NADH + 5 H(+)(in) = a ubiquinol + NAD(+) + 4 H(+)(out). Its function is as follows. Core subunit of the mitochondrial membrane respiratory chain NADH dehydrogenase (Complex I) that is believed to belong to the minimal assembly required for catalysis. Complex I functions in the transfer of electrons from NADH to the respiratory chain. The immediate electron acceptor for the enzyme is believed to be ubiquinone. The protein is NADH-ubiquinone oxidoreductase chain 5 (nd5) of Hypocrea jecorina (Trichoderma reesei).